Consider the following 202-residue polypeptide: ATP-dependent Clp protease proteolytic subunit (202 aa).

Ser-107 serves as the catalytic Nucleophile. His-132 is a catalytic residue.

It belongs to the peptidase S14 family. In terms of assembly, fourteen ClpP subunits assemble into 2 heptameric rings which stack back to back to give a disk-like structure with a central cavity, resembling the structure of eukaryotic proteasomes.

Its subcellular location is the cytoplasm. It carries out the reaction Hydrolysis of proteins to small peptides in the presence of ATP and magnesium. alpha-casein is the usual test substrate. In the absence of ATP, only oligopeptides shorter than five residues are hydrolyzed (such as succinyl-Leu-Tyr-|-NHMec, and Leu-Tyr-Leu-|-Tyr-Trp, in which cleavage of the -Tyr-|-Leu- and -Tyr-|-Trp bonds also occurs).. Functionally, cleaves peptides in various proteins in a process that requires ATP hydrolysis. Has a chymotrypsin-like activity. Plays a major role in the degradation of misfolded proteins. This chain is ATP-dependent Clp protease proteolytic subunit, found in Shewanella amazonensis (strain ATCC BAA-1098 / SB2B).